Reading from the N-terminus, the 35-residue chain is Photosystem II reaction center protein Psb30 (35 aa).

A helical transmembrane segment spans residues 7 to 27 (VFVQLLLLALIVLAGPAVILL).

The protein belongs to the Psb30/Ycf12 family. PSII is composed of 1 copy each of membrane proteins PsbA, PsbB, PsbC, PsbD, PsbE, PsbF, PsbH, PsbI, PsbJ, PsbK, PsbL, PsbM, PsbT, PsbX, PsbY, PsbZ, Psb30/Ycf12, peripheral proteins PsbO, CyanoQ (PsbQ), PsbU, PsbV and a large number of cofactors. It forms dimeric complexes.

The protein localises to the cellular thylakoid membrane. In terms of biological role, a core subunit of photosystem II (PSII), probably helps stabilize the reaction center. The chain is Photosystem II reaction center protein Psb30 from Synechococcus sp. (strain JA-3-3Ab) (Cyanobacteria bacterium Yellowstone A-Prime).